The chain runs to 388 residues: L-lactate dehydrogenase (388 aa).

The 380-residue stretch at 1-380 (MIISAASDYR…SADALSRVTR (380 aa)) folds into the FMN hydroxy acid dehydrogenase domain. Substrate is bound at residue Tyr-24. Residues Ser-106 and Gln-127 each contribute to the FMN site. Tyr-129 contributes to the substrate binding site. Thr-155 provides a ligand contact to FMN. Substrate is bound at residue Arg-164. Position 251 (Lys-251) interacts with FMN. His-275 serves as the catalytic Proton acceptor. Arg-278 lines the substrate pocket. Residue 306–330 (DSGIRSGLDVVRMLALGADAVLLGR) coordinates FMN.

It belongs to the FMN-dependent alpha-hydroxy acid dehydrogenase family. The cofactor is FMN.

It localises to the cell inner membrane. It catalyses the reaction (S)-lactate + A = pyruvate + AH2. Catalyzes the conversion of L-lactate to pyruvate. Is coupled to the respiratory chain. The chain is L-lactate dehydrogenase from Xanthomonas axonopodis pv. citri (strain 306).